The following is a 368-amino-acid chain: 2-aminoethylphosphonate--pyruvate transaminase (368 aa).

K192 carries the post-translational modification N6-(pyridoxal phosphate)lysine.

It belongs to the class-V pyridoxal-phosphate-dependent aminotransferase family. PhnW subfamily. As to quaternary structure, homodimer. Pyridoxal 5'-phosphate serves as cofactor.

The enzyme catalyses (2-aminoethyl)phosphonate + pyruvate = phosphonoacetaldehyde + L-alanine. Its function is as follows. Involved in phosphonate degradation. This is 2-aminoethylphosphonate--pyruvate transaminase from Pseudomonas putida (strain GB-1).